We begin with the raw amino-acid sequence, 296 residues long: 4-hydroxybenzoate octaprenyltransferase (296 aa).

8 helical membrane passes run 29 to 49 (IGVYLLLWPTLWAVWIAGKGA), 52 to 72 (LQTVCIFVLGVFLMRAAGCVI), 102 to 122 (ALVLFAVLVGLSFVLVLFTNA), 146 to 166 (YYPQVVLGAAFSWGMPMAFTA), 169 to 189 (GELPAAAWLLYIANLLWTVGY), 219 to 239 (VIILTLQGLALGCLMLAGARF), 241 to 261 (LGACFYIGLLAAAGCFAWEFW), and 275 to 295 (FLHNHWAGLAIFLGIVADYAV).

Belongs to the UbiA prenyltransferase family. The cofactor is Mg(2+).

The protein resides in the cell inner membrane. The catalysed reaction is all-trans-octaprenyl diphosphate + 4-hydroxybenzoate = 4-hydroxy-3-(all-trans-octaprenyl)benzoate + diphosphate. Its pathway is cofactor biosynthesis; ubiquinone biosynthesis. Functionally, catalyzes the prenylation of para-hydroxybenzoate (PHB) with an all-trans polyprenyl group. Mediates the second step in the final reaction sequence of ubiquinone-8 (UQ-8) biosynthesis, which is the condensation of the polyisoprenoid side chain with PHB, generating the first membrane-bound Q intermediate 3-octaprenyl-4-hydroxybenzoate. This chain is 4-hydroxybenzoate octaprenyltransferase, found in Pseudomonas syringae pv. syringae (strain B728a).